Consider the following 547-residue polypeptide: Alpha-1,3-mannosyl-glycoprotein 4-beta-N-acetylglucosaminyltransferase B (547 aa).

The Cytoplasmic portion of the chain corresponds to 1 to 7 (MRLRNGT). A helical; Signal-anchor for type II membrane protein membrane pass occupies residues 8–28 (FLTVLLFGLCGLISLSWYTAF). The Lumenal portion of the chain corresponds to 29 to 547 (SNSKGNVVDI…LSEIFIKKAE (519 aa)). Positions 36–83 (VDIYQREFLALRDRLHSAEQENLKRSKELNLVLDEIKRAIAEKQALRD) form a coiled coil. 3 N-linked (GlcNAc...) asparagine glycosylation sites follow: N85, N101, and N464.

This sequence belongs to the glycosyltransferase 54 family. It depends on a divalent metal cation as a cofactor. Post-translationally, N-glycosylated.

It localises to the golgi apparatus membrane. It carries out the reaction N(4)-{beta-D-GlcNAc-(1-&gt;2)-alpha-D-Man-(1-&gt;3)-[beta-D-GlcNAc-(1-&gt;2)-alpha-D-Man-(1-&gt;6)]-beta-D-Man-(1-&gt;4)-beta-D-GlcNAc-(1-&gt;4)-beta-D-GlcNAc}-L-asparaginyl-[protein] + UDP-N-acetyl-alpha-D-glucosamine = N(4)-{beta-D-GlcNAc-(1-&gt;2)-[beta-D-GlcNAc-(1-&gt;4)]-alpha-D-Man-(1-&gt;3)-[beta-D-GlcNAc-(1-&gt;2)-alpha-D-Man-(1-&gt;6)]-beta-D-Man-(1-&gt;4)-beta-D-GlcNAc-(1-&gt;4)-beta-D-GlcNAc}-L-asparaginyl-[protein] + UDP + H(+). The enzyme catalyses an N(4)-{beta-D-GlcNAc-(1-&gt;2)-alpha-D-Man-(1-&gt;3)-[alpha-D-Man-(1-&gt;6)]-beta-D-Man-(1-&gt;4)-beta-D-GlcNAc-(1-&gt;4)-beta-D-GlcNAc}-L-asparaginyl-[protein] + UDP-N-acetyl-alpha-D-glucosamine = an N(4)-{beta-D-GlcNAc-(1-&gt;2)-[beta-D-GlcNAc-(1-&gt;4)]-alpha-D-Man-(1-&gt;3)-[alpha-D-Man-(1-&gt;6)]-beta-D-Man-(1-&gt;4)-beta-D-GlcNAc-(1-&gt;4)-beta-D-GlcNAc}-L-asparaginyl-[protein] + UDP + H(+). It catalyses the reaction an N(4)-{beta-D-GlcNAc-(1-&gt;2)-alpha-D-Man-(1-&gt;3)-[beta-D-GlcNAc-(1-&gt;2)-[beta-D-GlcNAc-(1-&gt;6)]-alpha-D-Man-(1-&gt;6)]-beta-D-Man-(1-&gt;4)-beta-D-GlcNAc-(1-&gt;4)-beta-D-GlcNAc}-L-asparaginyl-[protein] + UDP-N-acetyl-alpha-D-glucosamine = an N(4)-{beta-D-GlcNAc-(1-&gt;2)-[beta-D-GlcNAc-(1-&gt;4)]-alpha-D-Man-(1-&gt;3)-[beta-D-GlcNAc-(1-&gt;2)-[beta-D-GlcNAc-(1-&gt;6)]-alpha-D-Man-(1-&gt;6)]-beta-D-Man-(1-&gt;4)-beta-D-GlcNAc-(1-&gt;4)-beta-D-GlcNAc}-L-asparaginyl-[protein] + UDP + H(+). The catalysed reaction is an N(4)-{beta-D-GlcNAc-(1-&gt;2)-alpha-D-Man-(1-&gt;3)-[beta-D-GlcNAc-(1-&gt;2)-alpha-D-Man-(1-&gt;6)]-beta-D-Man-(1-&gt;4)-beta-D-GlcNAc-(1-&gt;4)-[alpha-L-Fuc-(1-&gt;6)]-beta-D-GlcNAc}-L-asparaginyl-[protein] + UDP-N-acetyl-alpha-D-glucosamine = N(4)-{beta-D-GlcNAc-(1-&gt;2)-[beta-D-GlcNAc-(1-&gt;4)]-alpha-D-Man-(1-&gt;3)-[beta-D-GlcNAc-(1-&gt;2)-alpha-D-Man-(1-&gt;6)]-beta-D-Man-(1-&gt;4)-beta-D-GlcNAc-(1-&gt;4)-[alpha-L-Fuc-(1-&gt;6)]-beta-D-GlcNAc}-asparaginyl-[protein] + UDP + H(+). It carries out the reaction an N(4)-{beta-D-GlcNAc-(1-&gt;2)-alpha-D-Man-(1-&gt;3)-[beta-D-Gal-(1-&gt;4)-beta-D-GlcNAc-(1-&gt;2)-alpha-D-Man-(1-&gt;6)]-beta-D-Man-(1-&gt;4)-beta-D-GlcNAc-(1-&gt;4)-beta-D-GlcNAc}-L-asparaginyl-[protein] + UDP-N-acetyl-alpha-D-glucosamine = an N(4)-{beta-D-GlcNAc-(1-&gt;2)-[beta-D-GlcNAc-(1-&gt;4)]-alpha-D-Man-(1-&gt;3)-[beta-D-Gal-(1-&gt;4)-beta-D-GlcNAc-(1-&gt;2)-alpha-D-Man-(1-&gt;6)]-beta-D-Man-(1-&gt;4)-beta-D-GlcNAc-(1-&gt;4)-beta-D-GlcNAc}-L-asparaginyl-[protein] + UDP + H(+). The enzyme catalyses N(4)-{beta-D-GlcNAc-(1-&gt;2)-alpha-D-Man-(1-&gt;3)-[alpha-D-Man-(1-&gt;3)-{alpha-D-Man-(1-&gt;6)}-alpha-D-Man-(1-&gt;6)]-beta-D-Man-(1-&gt;4)-beta-D-GlcNAc-(1-&gt;4)-beta-D-GlcNAc}-asparaginyl-[protein] + UDP-N-acetyl-alpha-D-glucosamine = N(4)-{beta-D-GlcNAc-(1-&gt;2)-[beta-D-GlcNAc-(1-&gt;4)]-alpha-D-Man-(1-&gt;3)-[alpha-D-Man-(1-&gt;3)-{alpha-D-Man-(1-&gt;6)}-alpha-D-Man-(1-&gt;6)]-beta-D-Man-(1-&gt;4)-beta-D-GlcNAc-(1-&gt;4)-beta-D-GlcNAc}-asparaginyl-[protein] + UDP + H(+). It catalyses the reaction N(4)-{beta-D-GlcNAc-(1-&gt;2)-alpha-D-Man-(1-&gt;3)-beta-D-Man-(1-&gt;4)-beta-D-GlcNAc-(1-&gt;4)-beta-D-GlcNAc}-asparaginyl-[protein] + UDP-N-acetyl-alpha-D-glucosamine = N(4)-{beta-D-GlcNAc-(1-&gt;2)-[beta-D-GlcNAc-(1-&gt;4)]-alpha-D-Man-(1-&gt;3)-beta-D-Man-(1-&gt;4)-beta-D-GlcNAc-(1-&gt;4)-beta-D-GlcNAc}-asparaginyl-[protein] + UDP + H(+). It participates in protein modification; protein glycosylation. Its function is as follows. Glycosyltransferase that catalyze the transfer of GlcNAc from UDP-GlcNAc to the GlcNAcbeta1-2Manalpha1-3 arm of the core structure of N-linked glycans through a beta1-4 linkage and participates in the production of tri- and tetra-antennary N-linked sugar chains. Prefers complex-type N-glycans over hybrid-types. Has lower affinities for donors or acceptors than MGAT4A, suggesting that, under physiological conditions, it is not the main contributor in N-glycan biosynthesis. This is Alpha-1,3-mannosyl-glycoprotein 4-beta-N-acetylglucosaminyltransferase B (mgat4bQ9UQ53) from Danio rerio (Zebrafish).